A 478-amino-acid polypeptide reads, in one-letter code: Transposon Ty1-H Gag polyprotein (478 aa).

Polar residues-rich tracts occupy residues 1–10 (MESQQLSNYP), 48–60 (TKAN…TPAS), and 127–152 (QSQF…GNTF). Disordered regions lie at residues 1-84 (MESQ…QNGP), 126-174 (PQSQ…PPPM), and 390-478 (GSRN…PETY). The span at 153–165 (TDSSSADSDMTST) shows a compositional bias: low complexity. The RNA-binding stretch occupies residues 337–439 (NNGIHINNKV…NSKSKTARAH (103 aa)). Low complexity predominate over residues 440–456 (NVSTSNNSPSTDNDSIS). The segment covering 457 to 466 (KSTTEPIQLN) has biased composition (polar residues). Over residues 467–478 (NKHDLHLRPETY) the composition is skewed to basic and acidic residues.

Homotrimer.

Its subcellular location is the cytoplasm. Its function is as follows. Capsid protein (CA) is the structural component of the virus-like particle (VLP), forming the shell that encapsulates the retrotransposons dimeric RNA genome. The particles are assembled from trimer-clustered units and there are holes in the capsid shells that allow for the diffusion of macromolecules. CA also has nucleocapsid-like chaperone activity, promoting primer tRNA(i)-Met annealing to the multipartite primer-binding site (PBS), dimerization of Ty1 RNA and initiation of reverse transcription. The chain is Transposon Ty1-H Gag polyprotein (TY1A-H) from Saccharomyces cerevisiae (strain ATCC 204508 / S288c) (Baker's yeast).